The sequence spans 298 residues: Thymidylate synthase (298 aa).

Residues Arg-25 and 159–160 each bind dUMP; that span reads RR. Residue Cys-179 is the Nucleophile of the active site. Residues 200–203, Asn-211, and 241–243 contribute to the dUMP site; these read RSVD and HLY. (6R)-5,10-methylene-5,6,7,8-tetrahydrofolate is bound at residue Asp-203. Ala-297 provides a ligand contact to (6R)-5,10-methylene-5,6,7,8-tetrahydrofolate.

This sequence belongs to the thymidylate synthase family. Bacterial-type ThyA subfamily. In terms of assembly, homodimer.

Its subcellular location is the cytoplasm. The enzyme catalyses dUMP + (6R)-5,10-methylene-5,6,7,8-tetrahydrofolate = 7,8-dihydrofolate + dTMP. It participates in pyrimidine metabolism; dTTP biosynthesis. Functionally, catalyzes the reductive methylation of 2'-deoxyuridine-5'-monophosphate (dUMP) to 2'-deoxythymidine-5'-monophosphate (dTMP) while utilizing 5,10-methylenetetrahydrofolate (mTHF) as the methyl donor and reductant in the reaction, yielding dihydrofolate (DHF) as a by-product. This enzymatic reaction provides an intracellular de novo source of dTMP, an essential precursor for DNA biosynthesis. This chain is Thymidylate synthase, found in Cereibacter sphaeroides (strain ATCC 17025 / ATH 2.4.3) (Rhodobacter sphaeroides).